A 233-amino-acid polypeptide reads, in one-letter code: Small ribosomal subunit protein uS5 (233 aa).

Composition is skewed to basic and acidic residues over residues 1-12 and 39-54; these read MANESEIQKTEN and RGRD…RNEE. The tract at residues 1–54 is disordered; it reads MANESEIQKTENAEVANAANGTNPNNERRGRGGRGRGGRGRDGRGRRDDRRNEE. Positions 59–122 constitute an S5 DRBM domain; sequence LIEKLVHINR…AAAKKTMIRV (64 aa).

The protein belongs to the universal ribosomal protein uS5 family. Part of the 30S ribosomal subunit. Contacts proteins S4 and S8.

Its function is as follows. With S4 and S12 plays an important role in translational accuracy. Functionally, located at the back of the 30S subunit body where it stabilizes the conformation of the head with respect to the body. In Zymomonas mobilis subsp. mobilis (strain ATCC 31821 / ZM4 / CP4), this protein is Small ribosomal subunit protein uS5.